Consider the following 184-residue polypeptide: Photosystem I assembly protein Ycf4 (184 aa).

2 consecutive transmembrane segments (helical) span residues 19–39 (ISNL…VLVG) and 57–77 (IIFF…LFIS).

This sequence belongs to the Ycf4 family.

It localises to the plastid thylakoid membrane. In terms of biological role, seems to be required for the assembly of the photosystem I complex. This is Photosystem I assembly protein Ycf4 from Cuscuta reflexa (Southern Asian dodder).